The following is a 419-amino-acid chain: MNLTELKNTPVSELITLGESMGLENLARMRKQDIIFAILKQHAKSGEDIFGDGVLEILQDGFGFLRSADSSYLAGPDDIYVSPSQIRRFNLRTGDTISGKIRPPKEGERYFALLKVNEVNYDKPENARNKILFENLTPLHANSRLRMERGNGSTEDLTARVLDLASPIGRGQRGLIVAPPKAGKTMLLQNIAQSIAYNHPDCVLMVLLIDERPEEVTEMQRLVKGEVVASTFDEPASRHVQVAEMVIEKAKRLVEHKKDVIILLDSITRLARAYNTVVPASGKVLTGGVDANALHRPKRFFGAARNVEEGGSLTIIATALIDTGSKMDEVIYEEFKGTGNMELHLSRKIAEKRVFPAIDYNRSGTRKEELLTTQEELQKMWILRKIIHPMGEIDAMEFLINKLAMTKTNDDFFEMMKRS.

One can recognise a Rho RNA-BD domain in the interval 48 to 123 (DIFGDGVLEI…LKVNEVNYDK (76 aa)). RNA-binding regions lie at residues 61–66 (GFGFLR), 78–80 (DIY), and 108–110 (ERY). ATP contacts are provided by residues 169–174 (GRGQRG), 181–186 (KAGKTM), and R212. The interval 284–288 (VLTGG) is RNA-binding 2.

The protein belongs to the Rho family. Homohexamer. The homohexamer assembles into an open ring structure.

In terms of biological role, facilitates transcription termination by a mechanism that involves Rho binding to the nascent RNA, activation of Rho's RNA-dependent ATPase activity, and release of the mRNA from the DNA template. The chain is Transcription termination factor Rho from Salmonella typhi.